The sequence spans 211 residues: UPF0319 protein VC_A0026 (211 aa).

The N-terminal stretch at 1–21 (MKPMQRLTCLLALCFAASASA) is a signal peptide.

Belongs to the UPF0319 family.

This is UPF0319 protein VC_A0026 from Vibrio cholerae serotype O1 (strain ATCC 39315 / El Tor Inaba N16961).